The sequence spans 193 residues: Xanthine phosphoribosyltransferase (193 aa).

Residues L20 and N27 each coordinate xanthine. 129 to 133 provides a ligand contact to 5-phospho-alpha-D-ribose 1-diphosphate; that stretch reads ANGKA. K157 serves as a coordination point for xanthine.

The protein belongs to the purine/pyrimidine phosphoribosyltransferase family. Xpt subfamily. Homodimer.

The protein localises to the cytoplasm. The catalysed reaction is XMP + diphosphate = xanthine + 5-phospho-alpha-D-ribose 1-diphosphate. Its pathway is purine metabolism; XMP biosynthesis via salvage pathway; XMP from xanthine: step 1/1. Converts the preformed base xanthine, a product of nucleic acid breakdown, to xanthosine 5'-monophosphate (XMP), so it can be reused for RNA or DNA synthesis. This Bifidobacterium longum (strain NCC 2705) protein is Xanthine phosphoribosyltransferase.